A 491-amino-acid chain; its full sequence is Nucleotidyltransferase MB21D2 (491 aa).

A compositionally biased stretch (polar residues) spans 431–442 (RGSTTSIPSPQS). A disordered region spans residues 431–452 (RGSTTSIPSPQSDGGDPNQPDD). T435 is subject to Phosphothreonine. A phosphoserine mark is found at S436, S439, and S442.

This sequence belongs to the mab-21 family.

Probable nucleotidyltransferase that catalyzes the formation of cyclic dinucleotide second messenger in response to some unknown stimulus. This is Nucleotidyltransferase MB21D2 from Homo sapiens (Human).